The chain runs to 119 residues: Basic phospholipase A2 notechis II-5 (119 aa).

7 disulfides stabilise this stretch: Cys11/Cys71, Cys27/Cys118, Cys29/Cys45, Cys44/Cys99, Cys51/Cys92, Cys60/Cys85, and Cys78/Cys90. Positions 28, 30, and 32 each coordinate Ca(2+). The active site involves His48. Asp49 lines the Ca(2+) pocket. Asp93 is a catalytic residue.

Belongs to the phospholipase A2 family. Group I subfamily. D49 sub-subfamily. Ca(2+) is required as a cofactor. Expressed by the venom gland.

Its subcellular location is the secreted. It catalyses the reaction a 1,2-diacyl-sn-glycero-3-phosphocholine + H2O = a 1-acyl-sn-glycero-3-phosphocholine + a fatty acid + H(+). Snake venom phospholipase A2 (PLA2) that inhibits neuromuscular transmission by blocking acetylcholine release from the nerve termini. Notechis II-5 is less toxic than notexin but has a higher specific phospholipase activity. PLA2 catalyzes the calcium-dependent hydrolysis of the 2-acyl groups in 3-sn-phosphoglycerides. In Notechis scutatus scutatus (Mainland tiger snake), this protein is Basic phospholipase A2 notechis II-5.